The chain runs to 379 residues: Putative glutamate--cysteine ligase 2 (379 aa).

Belongs to the glutamate--cysteine ligase type 2 family. YbdK subfamily.

The catalysed reaction is L-cysteine + L-glutamate + ATP = gamma-L-glutamyl-L-cysteine + ADP + phosphate + H(+). Its function is as follows. ATP-dependent carboxylate-amine ligase which exhibits weak glutamate--cysteine ligase activity. This Mycobacterium avium (strain 104) protein is Putative glutamate--cysteine ligase 2.